The sequence spans 277 residues: Probable ABC transporter permease protein y4oR (277 aa).

Transmembrane regions (helical) follow at residues 15–35, 79–99, 109–129, 140–160, 189–209, 213–233, and 242–262; these read LWTL…TWMV, VVTI…AYAL, LLVA…VPVY, TYQA…IWLM, IMMP…FIAV, FLFA…AMLG, and WDAV…FAFI. The region spanning 74 to 263 is the ABC transmembrane type-1 domain; sequence IINSAVVTIV…TPVIAFAFIM (190 aa).

It belongs to the binding-protein-dependent transport system permease family. MalFG subfamily.

It localises to the cell inner membrane. Functionally, probably part of the binding-protein-dependent transport system y4oPQRS. This system probably transports a sugar-like molecule. Probably responsible for the translocation of the substrate across the membrane. The sequence is that of Probable ABC transporter permease protein y4oR from Sinorhizobium fredii (strain NBRC 101917 / NGR234).